A 165-amino-acid chain; its full sequence is Destrin (165 aa).

At Ala2 the chain carries N-acetylalanine. Ser3 bears the Phosphoserine mark. The ADF-H domain maps to 4–153 (GVQVADEVCR…NRTSIAEKLG (150 aa)). Lys19 is modified (N6-acetyllysine). The Nuclear localization signal motif lies at 30–34 (KKRKK).

It belongs to the actin-binding proteins ADF family. ISGylated.

In terms of biological role, actin-depolymerizing protein. Severs actin filaments (F-actin) and binds to actin monomers (G-actin). Acts in a pH-independent manner. The sequence is that of Destrin (Dstn) from Rattus norvegicus (Rat).